Reading from the N-terminus, the 260-residue chain is 3'-5' ssDNA/RNA exonuclease TatD (260 aa).

3 residues coordinate a divalent metal cation: E92, H128, and H153.

Belongs to the metallo-dependent hydrolases superfamily. TatD-type hydrolase family. TatD subfamily. In terms of assembly, monomer. Mg(2+) is required as a cofactor.

It localises to the cytoplasm. 3'-5' exonuclease that prefers single-stranded DNA and RNA. May play a role in the H(2)O(2)-induced DNA damage repair. In Edwardsiella piscicida, this protein is 3'-5' ssDNA/RNA exonuclease TatD.